A 1402-amino-acid polypeptide reads, in one-letter code: Erbin (1402 aa).

LRR repeat units lie at residues 23–44 (TVTT…IFTF), 47–68 (TLEE…LFNC), 70–91 (SLHK…IANL), 93–114 (NLRE…IKNC), 116–137 (VLTI…FSQL), 139–161 (NLTQ…GRLT), 162–183 (KLQI…MNRL), 185–206 (QLER…LEQL), 208–229 (GLRE…IGSL), 231–252 (QLTY…ISTC), 254–275 (NLQD…IGSL), 277–298 (NVTT…IGGL), 300–321 (SIEE…IGQL), 323–344 (NMRT…IGNW), 346–367 (NITV…MGDM), 369–391 (KLKV…TKLQ), and 392–413 (QLTA…QKET). Ser440 and Ser444 each carry phosphoserine. Disordered stretches follow at residues 465-489 (DEDK…PYPD) and 507-543 (DEET…TTKS). The span at 470-480 (EREAPPREGNL) shows a compositional bias: basic and acidic residues. Tyr483 is subject to Phosphotyrosine. Residue Thr485 is modified to Phosphothreonine. Residues 507 to 534 (DEETNEESGRDLKQHEDQQVVNKDKCVK) are compositionally biased toward basic and acidic residues. Residues Ser595, Ser599, Ser600, and Ser617 each carry the phosphoserine modification. A compositionally biased stretch (basic and acidic residues) spans 629–638 (NKKDDAKDAD). The interval 629 to 694 (NKKDDAKDAD…PVDSNSKVRQ (66 aa)) is disordered. A compositionally biased stretch (low complexity) spans 647–659 (NSNQNNSNCSSPS). Residues 660 to 689 (RMSDSVSLNTDSSQDTSLCSPVKQTPVDSN) show a composition bias toward polar residues. Ser712, Ser849, Ser854, and Ser869 each carry phosphoserine. Residues 824–864 (EDTAPSPGRVEPQKASSSADVGISKSTEDLSPQRSGPTGAV) form a disordered region. Residue Thr914 is modified to Phosphothreonine. Tyr917 is modified (phosphotyrosine). The residue at position 928 (Ser928) is a Phosphoserine. Tyr970 is subject to Phosphotyrosine. 2 disordered regions span residues 990 to 1018 (WHPK…ENHS) and 1070 to 1093 (TTIQ…TRRT). The span at 1070-1084 (TTIQRQSSVSSTASV) shows a compositional bias: polar residues. Tyr1097 bears the Phosphotyrosine mark. Disordered regions lie at residues 1107–1187 (GRTP…VPHD), 1198–1217 (AKKL…CQDD), and 1222–1274 (EEQN…VARH). 2 stretches are compositionally biased toward polar residues: residues 1128-1139 (GPNTSRPQSARP) and 1149-1164 (MSVS…PSKR). 2 positions are modified to phosphoserine: Ser1150 and Ser1171. A phosphoserine mark is found at Leu1231, Arg1234, and Ser1276. Residues 1311-1400 (EIRVRVEKDP…AVDLIIVREV (90 aa)) enclose the PDZ domain.

Belongs to the LAP (LRR and PDZ) protein family. As to quaternary structure, interacts with ERBB2, BPAG1 and ITGB4. May favor the localization of ERBB2, by restricting its presence to the basolateral membrane of epithelial cells. Also found to interact with ARVCF and delta catenin. Interacts (via C-terminus) with DST (via N-terminus). Interacts with NOD2 (via CARD domain). Isoform 2 is phosphorylated on Ser-1231 and Ser-1234.

It localises to the cell junction. The protein resides in the hemidesmosome. Its subcellular location is the nucleus membrane. The protein localises to the basolateral cell membrane. Functionally, acts as an adapter for the receptor ERBB2, in epithelia. By binding the unphosphorylated ERBB2 'Tyr-1248' receptor, it may contribute to stabilize this unphosphorylated state. Inhibits NOD2-dependent NF-kappa-B signaling and pro-inflammatory cytokine secretion. The chain is Erbin from Mus musculus (Mouse).